The sequence spans 462 residues: Keratin, type I cytoskeletal 28 (462 aa).

Residues 1 to 26 (MSLRFSGGSRHVGIQSGSLRPPSGGA) are disordered. The head stretch occupies residues 1–83 (MSLRFSGGSR…GSEGGLLSGN (83 aa)). The tract at residues 84–119 (EKVTMQNLNNRLASYLDNVKALEEANSELERKIKTW) is coil 1A. The IF rod domain maps to 84–399 (EKVTMQNLNN…RLIDGDENSC (316 aa)). Positions 120 to 141 (HEKYGPGSCRGLDRDYSKYHLT) are linker 1. Positions 142–233 (IEDLKSKIIS…KNHEEEMKVL (92 aa)) are coil 1B. The interval 234–256 (QCAAGGNVNVEMNAAPGVDLTVL) is linker 12. The segment at 257–395 (LNNMRAEYEA…ETYCRLIDGD (139 aa)) is coil 2. A tail region spans residues 396 to 462 (ENSCSVSKGF…NGKAEQRVPF (67 aa)).

It belongs to the intermediate filament family. In terms of assembly, heterotetramer of two type I and two type II keratins. In terms of tissue distribution, in the hair follicle and bulb, uniformly expressed in all three layers of the inner root sheath (the Henle layer, the Huxley layer and the cuticle) and observed in matrix cells (at protein level).

Its subcellular location is the cytoplasm. Its function is as follows. Essential for the proper assembly of types I and II keratin protein complexes and the formation of keratin intermediate filaments in the inner root sheath (irs). In Mus musculus (Mouse), this protein is Keratin, type I cytoskeletal 28.